A 173-amino-acid polypeptide reads, in one-letter code: Macro domain-containing protein in gbd 3'region (173 aa).

The 173-residue stretch at 1-173 (MSGEHLQVVH…NYRLYRERLS (173 aa)) folds into the Macro domain.

Belongs to the MacroD-type family.

The chain is Macro domain-containing protein in gbd 3'region from Cupriavidus necator (Alcaligenes eutrophus).